Here is a 565-residue protein sequence, read N- to C-terminus: NAD-dependent malic enzyme (565 aa).

Catalysis depends on tyrosine 104, which acts as the Proton donor. NAD(+) is bound at residue arginine 157. The active-site Proton acceptor is lysine 175. Glutamate 246, aspartate 247, and aspartate 270 together coordinate a divalent metal cation. 2 residues coordinate NAD(+): aspartate 270 and asparagine 418.

It belongs to the malic enzymes family. As to quaternary structure, homotetramer. Requires Mg(2+) as cofactor. It depends on Mn(2+) as a cofactor.

The enzyme catalyses (S)-malate + NAD(+) = pyruvate + CO2 + NADH. It catalyses the reaction oxaloacetate + H(+) = pyruvate + CO2. The protein is NAD-dependent malic enzyme of Salmonella choleraesuis (strain SC-B67).